We begin with the raw amino-acid sequence, 228 residues long: MTFDRSIKIAPSILSADFADFGREIQAIEAQGADWVHVDVMDGHFVPNLTFGPPAVAAFRKHVKTVMDVHLMISPVDAYIDAYAQAGADVLTAHVEAGPHIHRTLQAIRAAGMKSGVAINPGTPAEAIEHVLDIADVVCVMTVNPGFGGQKYIDMTAKVRKLRAMIGDRPVHIEIDGGMDPVTAPLMAAAGADVFVAGSGVFKGGSVSTPEVYGKNIAAIRAAAQAAL.

Ser12 contacts substrate. 3 residues coordinate a divalent metal cation: His37, Asp39, and His70. Asp39 acts as the Proton acceptor in catalysis. Substrate is bound by residues His70, 146–149 (GFGG), 176–178 (DGG), and 198–199 (GS). An a divalent metal cation-binding site is contributed by Asp176. Asp176 functions as the Proton donor in the catalytic mechanism.

This sequence belongs to the ribulose-phosphate 3-epimerase family. Requires a divalent metal cation as cofactor.

It catalyses the reaction D-ribulose 5-phosphate = D-xylulose 5-phosphate. It participates in carbohydrate degradation. Functionally, catalyzes the reversible epimerization of D-ribulose 5-phosphate to D-xylulose 5-phosphate. In Rhodobacter capsulatus (Rhodopseudomonas capsulata), this protein is Ribulose-phosphate 3-epimerase.